The chain runs to 299 residues: Oxygen-dependent coproporphyrinogen-III oxidase (299 aa).

Residue S92 participates in substrate binding. Residues H96 and H106 each contribute to the a divalent metal cation site. The Proton donor role is filled by H106. 108–110 (NVR) is a substrate binding site. Residues H145 and H175 each coordinate a divalent metal cation. The segment at 240–275 (YVEFNLVWDRGTLFGLQTGGRTESILMSMPPLVRWE) is important for dimerization. A substrate-binding site is contributed by 258-260 (GGR).

It belongs to the aerobic coproporphyrinogen-III oxidase family. Homodimer. It depends on a divalent metal cation as a cofactor.

Its subcellular location is the cytoplasm. It catalyses the reaction coproporphyrinogen III + O2 + 2 H(+) = protoporphyrinogen IX + 2 CO2 + 2 H2O. It participates in porphyrin-containing compound metabolism; protoporphyrin-IX biosynthesis; protoporphyrinogen-IX from coproporphyrinogen-III (O2 route): step 1/1. In terms of biological role, involved in the heme biosynthesis. Catalyzes the aerobic oxidative decarboxylation of propionate groups of rings A and B of coproporphyrinogen-III to yield the vinyl groups in protoporphyrinogen-IX. In Klebsiella pneumoniae subsp. pneumoniae (strain ATCC 700721 / MGH 78578), this protein is Oxygen-dependent coproporphyrinogen-III oxidase.